A 271-amino-acid chain; its full sequence is NADPH-dependent 7-cyano-7-deazaguanine reductase (271 aa).

Residue 79–81 (IES) coordinates substrate. An NADPH-binding site is contributed by 81–82 (SK). C178 (thioimide intermediate) is an active-site residue. Catalysis depends on D185, which acts as the Proton donor. 217–218 (HE) lines the substrate pocket. Residue 246-247 (RG) participates in NADPH binding.

This sequence belongs to the GTP cyclohydrolase I family. QueF type 2 subfamily. Homodimer.

The protein resides in the cytoplasm. It carries out the reaction 7-aminomethyl-7-carbaguanine + 2 NADP(+) = 7-cyano-7-deazaguanine + 2 NADPH + 3 H(+). The protein operates within tRNA modification; tRNA-queuosine biosynthesis. In terms of biological role, catalyzes the NADPH-dependent reduction of 7-cyano-7-deazaguanine (preQ0) to 7-aminomethyl-7-deazaguanine (preQ1). The protein is NADPH-dependent 7-cyano-7-deazaguanine reductase of Acinetobacter baylyi (strain ATCC 33305 / BD413 / ADP1).